The chain runs to 239 residues: Ribonuclease 3 (239 aa).

One can recognise an RNase III domain in the interval 11–133 (HAAIQKKLGY…MFAAVSFDAD (123 aa)). Glu-46 lines the Mg(2+) pocket. Residue Asp-50 is part of the active site. Residues Asp-119 and Glu-122 each coordinate Mg(2+). A DRBM domain is found at 160 to 230 (DGKTALQEAL…AKEALKWLEE (71 aa)).

The protein belongs to the ribonuclease III family. Homodimer. Mg(2+) serves as cofactor.

The protein resides in the cytoplasm. It carries out the reaction Endonucleolytic cleavage to 5'-phosphomonoester.. In terms of biological role, digests double-stranded RNA. Involved in the processing of primary rRNA transcript to yield the immediate precursors to the large and small rRNAs (23S and 16S). Also processes some mRNAs, and tRNAs when they are encoded in the rRNA operon. Functionally, CRISPR (clustered regularly interspaced short palindromic repeat) is an adaptive immune system that provides protection against mobile genetic elements (viruses, transposable elements and conjugative plasmids). CRISPR clusters contain spacers, sequences complementary to antecedent mobile elements, and target invading nucleic acids. CRISPR clusters are transcribed and processed into CRISPR RNA (crRNA). In this organism endogenous ribonuclease 3 and Cas9 are required for correct coprocessing of pre-crRNA and the trans-encoded small RNA (tracrRNA). Cas9, crRNA and tracRNA are required for cleavage of invading DNA. Involved in 3'-end processing but not 5'-end processing of crRNA and tracrRNA. This chain is Ribonuclease 3, found in Neisseria meningitidis serogroup C (strain 8013).